The following is a 520-amino-acid chain: Probable bifunctional tRNA threonylcarbamoyladenosine biosynthesis protein (520 aa).

A kae1 region spans residues 1-318 (MKIGPVLGIE…YRADQVLVTW (318 aa)). 3 residues coordinate Fe cation: H105, H109, and Y126. L-threonylcarbamoyladenylate-binding positions include 126-130 (YASGA), D158, G171, E175, and N251. D279 serves as a coordination point for Fe cation. In terms of domain architecture, Protein kinase spans 327 to 520 (RHPDAYSARG…HEIELRGRYL (194 aa)). Residues 333 to 341 (SARGAEAIV) and K350 each bind ATP. D437 functions as the Proton acceptor; for kinase activity in the catalytic mechanism.

It in the N-terminal section; belongs to the KAE1 / TsaD family. The protein in the C-terminal section; belongs to the protein kinase superfamily. Tyr protein kinase family. BUD32 subfamily. Component of the KEOPS complex that consists of Kae1, Bud32, Cgi121 and Pcc1; the whole complex dimerizes. Requires Fe(2+) as cofactor.

It is found in the cytoplasm. The catalysed reaction is L-seryl-[protein] + ATP = O-phospho-L-seryl-[protein] + ADP + H(+). The enzyme catalyses L-threonyl-[protein] + ATP = O-phospho-L-threonyl-[protein] + ADP + H(+). It catalyses the reaction L-threonylcarbamoyladenylate + adenosine(37) in tRNA = N(6)-L-threonylcarbamoyladenosine(37) in tRNA + AMP + H(+). Functionally, required for the formation of a threonylcarbamoyl group on adenosine at position 37 (t(6)A37) in tRNAs that read codons beginning with adenine. Is a component of the KEOPS complex that is probably involved in the transfer of the threonylcarbamoyl moiety of threonylcarbamoyl-AMP (TC-AMP) to the N6 group of A37. The Kae1 domain likely plays a direct catalytic role in this reaction. The Bud32 domain probably displays kinase activity that regulates Kae1 function. This Methanospirillum hungatei JF-1 (strain ATCC 27890 / DSM 864 / NBRC 100397 / JF-1) protein is Probable bifunctional tRNA threonylcarbamoyladenosine biosynthesis protein.